The primary structure comprises 338 residues: MKRMIALDGAQGEGGGQILRSALSLSMITGLPFTITGIRAGRAKPGLLRQHLTAVKAAAEICRATVEGAELGSQRLLFRPGTVRGGDYRFAIGSAGSCTLVLQTVLPALWFADGPSRVEVSGGTDNPSAPPADFIRRVLEPLLAKMGIHQQTTLIRHGFYPAGGGVVATEVSPVALFNTLQLGERGNIVQMRGEVLLAGVPRHVAEREIATLVGSFSLHEQNIHNLPRDQGPGNTVSLEVESENITERFFVVGEKRVSAEVVAAQLVKEVKRYLASPAAVGEYLADQLVLPMALAGAGEFTVAHPSCHLLTNIAVVERFLPVRFGLVEADGVTRVSIE.

Residues Q103 and 283–287 (YLADQ) each bind ATP. Residue H308 is the Tele-AMP-histidine intermediate of the active site.

This sequence belongs to the RNA 3'-terminal cyclase family. Type 1 subfamily.

It localises to the cytoplasm. It catalyses the reaction a 3'-end 3'-phospho-ribonucleotide-RNA + ATP = a 3'-end 2',3'-cyclophospho-ribonucleotide-RNA + AMP + diphosphate. In terms of biological role, catalyzes the conversion of 3'-phosphate to a 2',3'-cyclic phosphodiester at the end of RNA. The mechanism of action of the enzyme occurs in 3 steps: (A) adenylation of the enzyme by ATP; (B) transfer of adenylate to an RNA-N3'P to produce RNA-N3'PP5'A; (C) and attack of the adjacent 2'-hydroxyl on the 3'-phosphorus in the diester linkage to produce the cyclic end product. The biological role of this enzyme is unknown but it is likely to function in some aspects of cellular RNA processing. The polypeptide is RNA 3'-terminal phosphate cyclase (Escherichia coli (strain SMS-3-5 / SECEC)).